Consider the following 76-residue polypeptide: U7-lycotoxin-Ls1c (76 aa).

Positions 1 to 22 are cleaved as a signal peptide; sequence MKLIIFTGLALFLLVSLIDVEA. Residues 23–26 constitute a propeptide that is removed on maturation; it reads QNEG.

It belongs to the neurotoxin 19 (CSTX) family. 07 (U7-Lctx) subfamily. Post-translationally, contains 4 disulfide bonds. Expressed by the venom gland.

The protein resides in the secreted. The sequence is that of U7-lycotoxin-Ls1c from Lycosa singoriensis (Wolf spider).